A 131-amino-acid chain; its full sequence is Small ribosomal subunit protein uS8c (131 aa).

It belongs to the universal ribosomal protein uS8 family. Part of the 30S ribosomal subunit.

The protein localises to the plastid. The protein resides in the chloroplast. Its function is as follows. One of the primary rRNA binding proteins, it binds directly to 16S rRNA central domain where it helps coordinate assembly of the platform of the 30S subunit. The protein is Small ribosomal subunit protein uS8c (rps8) of Phalaenopsis aphrodite subsp. formosana (Moth orchid).